Consider the following 397-residue polypeptide: Argininosuccinate synthase (397 aa).

An ATP-binding site is contributed by 9–17 (AYSGGLDTS). Residue Tyr-87 coordinates L-citrulline. An ATP-binding site is contributed by Gly-117. Thr-119, Asn-123, and Asp-124 together coordinate L-aspartate. Position 123 (Asn-123) interacts with L-citrulline. 5 residues coordinate L-citrulline: Arg-127, Ser-175, Ser-184, Glu-257, and Tyr-269.

This sequence belongs to the argininosuccinate synthase family. Type 1 subfamily. As to quaternary structure, homotetramer.

Its subcellular location is the cytoplasm. It carries out the reaction L-citrulline + L-aspartate + ATP = 2-(N(omega)-L-arginino)succinate + AMP + diphosphate + H(+). It participates in amino-acid biosynthesis; L-arginine biosynthesis; L-arginine from L-ornithine and carbamoyl phosphate: step 2/3. The protein is Argininosuccinate synthase of Dictyoglomus thermophilum (strain ATCC 35947 / DSM 3960 / H-6-12).